The chain runs to 639 residues: Envelope glycoprotein (639 aa).

The N-terminal stretch at 1-34 (MESPTHPKPSKDKTFPWNLVFLVGILFQIDMGMA) is a signal peptide. The Extracellular segment spans residues 35–583 (NPSPHQVYNV…FNKSPWFTTL (549 aa)). 2 N-linked (GlcNAc...) asparagine; by host glycosylation sites follow: asparagine 43 and asparagine 58. Disulfide bonds link cysteine 122-cysteine 144 and cysteine 136-cysteine 149. Residues 232–278 (QAMGPNLVLPDQKPPSRQSQTKSKVTTQRPQITSSTPRSVASATMGP) are disordered. Residues 246–273 (PSRQSQTKSKVTTQRPQITSSTPRSVAS) show a composition bias toward polar residues. 2 N-linked (GlcNAc...) asparagine; by host glycosylation sites follow: asparagine 299 and asparagine 304. Disulfide bonds link cysteine 309-cysteine 312, cysteine 309-cysteine 536, and cysteine 528-cysteine 535. The short motif at 309–312 (CWLC) is the CXXC element. Residues asparagine 328, asparagine 331, asparagine 387, and asparagine 407 are each glycosylated (N-linked (GlcNAc...) asparagine; by host). Residues 445 to 465 (ISLTVALMLGGLTVGGIAAGV) form a fusion peptide region. Coiled-coil stretches lie at residues 473 to 522 (LETA…ILFL) and 532 to 568 (KEEC…SQQG). The tract at residues 511 to 527 (LQNRRGLDILFLQEGGL) is immunosuppression. Residues 528-536 (CAALKEECC) carry the CX6CC motif. A helical membrane pass occupies residues 584-604 (ISSIMGPLLILLLILLLGPCI). A lipid anchor (S-palmitoyl cysteine; by host) is attached at cysteine 603. At 605-639 (LNRLVQFVKDRISVVQALILTQQYQQIQQYDSDRP) the chain is on the cytoplasmic side.

The mature envelope protein (Env) consists of a trimer of SU-TM heterodimers attached by a labile interchain disulfide bond. Specific enzymatic cleavages in vivo yield mature proteins. Envelope glycoproteins are synthesized as an inactive precursor that is N-glycosylated and processed likely by host cell furin or by a furin-like protease in the Golgi to yield the mature SU and TM proteins. The cleavage site between SU and TM requires the minimal sequence [KR]-X-[KR]-R. The R-peptide is released from the C-terminus of the cytoplasmic tail of the TM protein upon particle formation as a result of proteolytic cleavage by the viral protease. Cleavage of this peptide is required for TM to become fusogenic. Post-translationally, the CXXC motif is highly conserved across a broad range of retroviral envelope proteins. It is thought to participate in the formation of a labile disulfide bond possibly with the CX6CC motif present in the transmembrane protein. Isomerization of the intersubunit disulfide bond to an SU intrachain disulfide bond is thought to occur upon receptor recognition in order to allow membrane fusion. In terms of processing, the transmembrane protein is palmitoylated. The R-peptide is palmitoylated.

It localises to the virion membrane. The protein localises to the host cell membrane. Its function is as follows. The surface protein (SU) attaches the virus to the host cell by binding to its receptor. This interaction triggers the refolding of the transmembrane protein (TM) and is thought to activate its fusogenic potential by unmasking its fusion peptide. Fusion occurs at the host cell plasma membrane. In terms of biological role, the transmembrane protein (TM) acts as a class I viral fusion protein. Under the current model, the protein has at least 3 conformational states: pre-fusion native state, pre-hairpin intermediate state, and post-fusion hairpin state. During viral and target cell membrane fusion, the coiled coil regions (heptad repeats) assume a trimer-of-hairpins structure, positioning the fusion peptide in close proximity to the C-terminal region of the ectodomain. The formation of this structure appears to drive apposition and subsequent fusion of viral and target cell membranes. Membranes fusion leads to delivery of the nucleocapsid into the cytoplasm. This Feline leukemia virus (strain C/Sarma) protein is Envelope glycoprotein (env).